A 229-amino-acid polypeptide reads, in one-letter code: Putative N-acetylmannosamine-6-phosphate 2-epimerase 2 (229 aa).

This sequence belongs to the NanE family.

The catalysed reaction is an N-acyl-D-glucosamine 6-phosphate = an N-acyl-D-mannosamine 6-phosphate. It functions in the pathway amino-sugar metabolism; N-acetylneuraminate degradation; D-fructose 6-phosphate from N-acetylneuraminate: step 3/5. In terms of biological role, converts N-acetylmannosamine-6-phosphate (ManNAc-6-P) to N-acetylglucosamine-6-phosphate (GlcNAc-6-P). The sequence is that of Putative N-acetylmannosamine-6-phosphate 2-epimerase 2 (nanE2) from Salmonella typhimurium (strain LT2 / SGSC1412 / ATCC 700720).